The following is a 148-amino-acid chain: 3-hydroxyacyl-[acyl-carrier-protein] dehydratase FabZ (148 aa).

The active site involves histidine 48.

It belongs to the thioester dehydratase family. FabZ subfamily.

Its subcellular location is the cytoplasm. It catalyses the reaction a (3R)-hydroxyacyl-[ACP] = a (2E)-enoyl-[ACP] + H2O. In terms of biological role, involved in unsaturated fatty acids biosynthesis. Catalyzes the dehydration of short chain beta-hydroxyacyl-ACPs and long chain saturated and unsaturated beta-hydroxyacyl-ACPs. This is 3-hydroxyacyl-[acyl-carrier-protein] dehydratase FabZ from Acinetobacter baylyi (strain ATCC 33305 / BD413 / ADP1).